A 555-amino-acid polypeptide reads, in one-letter code: Cytochrome P450 78A11 (555 aa).

The helical transmembrane segment at 12–32 (VDATWWAYALPALLGADTLCA) threads the bilayer. Cys495 is a heme binding site.

The protein belongs to the cytochrome P450 family. The cofactor is heme. As to expression, expressed in seedlings, shoot apices and young panicles, but not in mature leaves, calli and roots.

It is found in the membrane. Functionally, involved in the regular timing (plastochron) of lateral organs formation. May regulate the rate of leaf initiation and the duration of vegetative phase. Seems to be redundant to the function of PLASTOCHRON2, but to act in an independent pathway. In Oryza sativa subsp. japonica (Rice), this protein is Cytochrome P450 78A11 (CYP78A11).